Reading from the N-terminus, the 477-residue chain is 3-isopropylmalate dehydratase large subunit (477 aa).

Residues C352, C413, and C416 each contribute to the [4Fe-4S] cluster site.

Belongs to the aconitase/IPM isomerase family. LeuC type 1 subfamily. Heterodimer of LeuC and LeuD. It depends on [4Fe-4S] cluster as a cofactor.

It catalyses the reaction (2R,3S)-3-isopropylmalate = (2S)-2-isopropylmalate. Its pathway is amino-acid biosynthesis; L-leucine biosynthesis; L-leucine from 3-methyl-2-oxobutanoate: step 2/4. Catalyzes the isomerization between 2-isopropylmalate and 3-isopropylmalate, via the formation of 2-isopropylmaleate. The protein is 3-isopropylmalate dehydratase large subunit of Pseudomonas putida (strain W619).